The sequence spans 404 residues: uncharacterized protein (404 aa).

Residues 262-278 are compositionally biased toward polar residues; that stretch reads VSTGDTSPYGTEDSSPA. Disordered regions lie at residues 262-307 and 320-340; these read VSTG…SPSL and KKSH…GGAD. 3 positions are modified to phosphoserine: S268, S276, and S279. A phosphothreonine mark is found at T290 and T293. S304, S306, S324, S358, and S362 each carry phosphoserine. Over residues 320-336 the composition is skewed to basic and acidic residues; that stretch reads KKSHSANDSEEFFREDD.

This is an uncharacterized protein from Rattus norvegicus (Rat).